Reading from the N-terminus, the 90-residue chain is Putative regulatory protein Dred_1699 (90 aa).

This sequence belongs to the RemA family.

This chain is Putative regulatory protein Dred_1699, found in Desulforamulus reducens (strain ATCC BAA-1160 / DSM 100696 / MI-1) (Desulfotomaculum reducens).